We begin with the raw amino-acid sequence, 447 residues long: ATP-dependent protease ATPase subunit HslU (447 aa).

ATP is bound by residues isoleucine 18, 60 to 65 (GVGKTE), aspartate 259, glutamate 325, and arginine 397.

It belongs to the ClpX chaperone family. HslU subfamily. As to quaternary structure, a double ring-shaped homohexamer of HslV is capped on each side by a ring-shaped HslU homohexamer. The assembly of the HslU/HslV complex is dependent on binding of ATP.

Its subcellular location is the cytoplasm. In terms of biological role, ATPase subunit of a proteasome-like degradation complex; this subunit has chaperone activity. The binding of ATP and its subsequent hydrolysis by HslU are essential for unfolding of protein substrates subsequently hydrolyzed by HslV. HslU recognizes the N-terminal part of its protein substrates and unfolds these before they are guided to HslV for hydrolysis. The protein is ATP-dependent protease ATPase subunit HslU of Burkholderia thailandensis (strain ATCC 700388 / DSM 13276 / CCUG 48851 / CIP 106301 / E264).